Reading from the N-terminus, the 260-residue chain is NH(3)-dependent NAD(+) synthetase (260 aa).

31-38 (GLSGGLDS) is a binding site for ATP. Asp37 is a binding site for Mg(2+). Arg112 contributes to the deamido-NAD(+) binding site. Thr132 lines the ATP pocket. Position 137 (Glu137) interacts with Mg(2+). The ATP site is built by Lys161 and Ser183.

Belongs to the NAD synthetase family. As to quaternary structure, homodimer.

The catalysed reaction is deamido-NAD(+) + NH4(+) + ATP = AMP + diphosphate + NAD(+) + H(+). The protein operates within cofactor biosynthesis; NAD(+) biosynthesis; NAD(+) from deamido-NAD(+) (ammonia route): step 1/1. In terms of biological role, catalyzes the ATP-dependent amidation of deamido-NAD to form NAD. Uses ammonia as a nitrogen source. The sequence is that of NH(3)-dependent NAD(+) synthetase from Helicobacter pylori (strain ATCC 700392 / 26695) (Campylobacter pylori).